The sequence spans 429 residues: C4-dicarboxylate transport protein (429 aa).

A run of 8 helical transmembrane segments spans residues 9 to 29 (VLYV…HFYP), 45 to 65 (LIKM…IAGM), 79 to 99 (LLYF…ATHI), 149 to 169 (GEIL…AHLG), 185 to 205 (VLFG…FGAM), 223 to 243 (LIGT…GTIA), 308 to 328 (IYMT…LTWM), and 356 to 376 (AATL…ILGI).

It belongs to the dicarboxylate/amino acid:cation symporter (DAACS) (TC 2.A.23) family.

Its subcellular location is the cell inner membrane. Responsible for the transport of dicarboxylates such as succinate, fumarate, and malate from the periplasm across the membrane. The chain is C4-dicarboxylate transport protein from Burkholderia ambifaria (strain MC40-6).